Here is a 1482-residue protein sequence, read N- to C-terminus: Lysine-specific demethylase rbr-2 (1482 aa).

Residues 1–45 are disordered; it reads MRGRRQEDIATTSSAPSTSTSHKKKTVSSNGSFRPRTQSNPGGKM. Low complexity predominate over residues 11 to 20; sequence TTSSAPSTST. Residues 30–41 show a composition bias toward polar residues; the sequence is NGSFRPRTQSNP. The 42-residue stretch at 61-102 folds into the JmjN domain; sequence APVYYPTSEEFADPIEYVAKIRPDAERYGVVKIVPPSDFKPP. In terms of domain architecture, ARID spans 126 to 223; it reads VKEKHTFIER…HIEPFNRNLK (98 aa). Residues 244–316 form a disordered region; it reads YQHHHGTMRS…SKTEEDEEEN (73 aa). The span at 251-264 shows a compositional bias: basic and acidic residues; that stretch reads MRSEPENTDGKNTE. Basic residues predominate over residues 277–288; it reads GRRRSKNKKPVP. A PHD-type 1 zinc finger spans residues 322–374; the sequence is QVYCVSCNEGKDEDLLLLCDIEGCNSGRHTYCCDPVLDEVPEGEWRCPKCIES. One can recognise a JmjC domain in the interval 471-637; that stretch reads QYANHAWNLN…KGRECVQSYS (167 aa). Residues H517, D520, and H605 each contribute to the Fe cation site. The segment at 1206 to 1260 adopts a PHD-type 2 zinc-finger fold; sequence LEGCCCLGGNKSDSSESVLSCIMCESQFHVRCCEWSTFFQHLPKGCFMCVRCLRG. The disordered stretch occupies residues 1361-1403; sequence QQRPVKSKPSASLFDPKLNSKRKRPNPSQKDSSKSKSRKRQGQ. Residues 1416–1471 form a PHD-type 3 zinc finger; it reads FKSCQARSCLKPFGDSVNWVMCDAGCKNWFHVICVGFTLREINDMHEYRCSSCLDH.

The protein belongs to the JARID1 histone demethylase family. Fe(2+) serves as cofactor.

The protein resides in the nucleus. The enzyme catalyses N(6),N(6),N(6)-trimethyl-L-lysyl(4)-[histone H3] + 3 2-oxoglutarate + 3 O2 = L-lysyl(4)-[histone H3] + 3 formaldehyde + 3 succinate + 3 CO2. Histone demethylase that specifically demethylates 'Lys-4' of histone H3, thereby playing a central role in histone code. Does not demethylate histone H3 'Lys-9', H3 'Lys-27', H3 'Lys-36', H3 'Lys-79' or H4 'Lys-20'. Demethylates trimethylated and dimethylated but not monomethylated H3 'Lys-4'. Involved in larval development and vulva formation. This is Lysine-specific demethylase rbr-2 (rbr-2) from Caenorhabditis briggsae.